The sequence spans 171 residues: Putative phosphoesterase BPUM_1117 (171 aa).

H34 functions as the Proton donor in the catalytic mechanism. 2 consecutive short sequence motifs (HXTX) follow at residues 34–37 (HLTL) and 115–118 (HVTV). H115 serves as the catalytic Proton acceptor.

This sequence belongs to the 2H phosphoesterase superfamily. YjcG family.

The polypeptide is Putative phosphoesterase BPUM_1117 (Bacillus pumilus (strain SAFR-032)).